Consider the following 496-residue polypeptide: Legumin (496 aa).

The first 21 residues, 1-21 (MAKLLALSLSFCFLLFGTCFA), serve as a signal peptide directing secretion. 2 cysteine pairs are disulfide-bonded: cysteine 31-cysteine 64 and cysteine 107-cysteine 318. The Cupin type-1 1 domain occupies 36-230 (LNALKPDNRI…ALNVNRRIVN (195 aa)). The interval 240–311 (EKGAIVKVKG…RGGSKSQRDN (72 aa)) is disordered. The segment covering 257–269 (PEKEPRQKRGSRQ) has biased composition (basic and acidic residues). The region spanning 324–453 (QNIGSSSSPD…INVCQKKLLQ (130 aa)) is the Cupin type-1 2 domain.

Belongs to the 11S seed storage protein (globulins) family. Hexamer; each subunit is composed of an acidic and a basic chain derived from a single precursor and linked by a disulfide bond.

In terms of biological role, seed storage protein. Alpha-amylase inhibitor. The protein is Legumin of Cicer arietinum (Chickpea).